A 156-amino-acid chain; its full sequence is Ribosomal RNA large subunit methyltransferase H (156 aa).

S-adenosyl-L-methionine is bound by residues Leu73, Gly104, and 123 to 128 (LSPLTL).

The protein belongs to the RNA methyltransferase RlmH family. As to quaternary structure, homodimer.

It is found in the cytoplasm. The catalysed reaction is pseudouridine(1915) in 23S rRNA + S-adenosyl-L-methionine = N(3)-methylpseudouridine(1915) in 23S rRNA + S-adenosyl-L-homocysteine + H(+). Functionally, specifically methylates the pseudouridine at position 1915 (m3Psi1915) in 23S rRNA. This chain is Ribosomal RNA large subunit methyltransferase H, found in Aliivibrio salmonicida (strain LFI1238) (Vibrio salmonicida (strain LFI1238)).